Reading from the N-terminus, the 44-residue chain is Protein PsbN (44 aa).

A helical membrane pass occupies residues phenylalanine 6–valine 26.

It belongs to the PsbN family.

It is found in the plastid. The protein localises to the chloroplast thylakoid membrane. May play a role in photosystem I and II biogenesis. The chain is Protein PsbN from Tetradesmus obliquus (Green alga).